A 34-amino-acid chain; its full sequence is Brevinin-2GHa (34 aa).

A disulfide bond links Cys-27 and Cys-33.

Expressed by the skin glands.

Its subcellular location is the secreted. Its function is as follows. Antimicrobial peptide. Active against the Gram-positive bacteria S.aureus FDA209P (MIC=14.9 ug/ml) and B.subtilis ATCC 6633 (MIC&gt;64 ug/ml), but not active against the Gram-negative bacterium E.coli or the fungus C.albicans. The protein is Brevinin-2GHa of Sylvirana guentheri (Gunther's frog).